Reading from the N-terminus, the 294-residue chain is Elongation factor Ts (294 aa).

The segment at 80–83 is involved in Mg(2+) ion dislocation from EF-Tu; sequence TDFV.

This sequence belongs to the EF-Ts family.

The protein resides in the cytoplasm. Functionally, associates with the EF-Tu.GDP complex and induces the exchange of GDP to GTP. It remains bound to the aminoacyl-tRNA.EF-Tu.GTP complex up to the GTP hydrolysis stage on the ribosome. This Polynucleobacter asymbioticus (strain DSM 18221 / CIP 109841 / QLW-P1DMWA-1) (Polynucleobacter necessarius subsp. asymbioticus) protein is Elongation factor Ts.